Reading from the N-terminus, the 165-residue chain is Basic transcription factor 3 (165 aa).

Residues 33-97 (TTDDKRLQST…PQTKKLQDIL (65 aa)) form the NAC-A/B domain. The span at 120-134 (QKQASGEGNAASATI) shows a compositional bias: polar residues. The tract at residues 120–144 (QKQASGEGNAASATIQEEDDDDVPE) is disordered.

The protein belongs to the NAC-beta family. In terms of assembly, part of the nascent polypeptide-associated complex (NAC). Interacts with EIF(ISO)4E.

In Arabidopsis thaliana (Mouse-ear cress), this protein is Basic transcription factor 3.